We begin with the raw amino-acid sequence, 96 residues long: Co-chaperonin GroES (96 aa).

The protein belongs to the GroES chaperonin family. Heptamer of 7 subunits arranged in a ring. Interacts with the chaperonin GroEL.

The protein resides in the cytoplasm. Functionally, together with the chaperonin GroEL, plays an essential role in assisting protein folding. The GroEL-GroES system forms a nano-cage that allows encapsulation of the non-native substrate proteins and provides a physical environment optimized to promote and accelerate protein folding. GroES binds to the apical surface of the GroEL ring, thereby capping the opening of the GroEL channel. This chain is Co-chaperonin GroES, found in Actinobacillus pleuropneumoniae serotype 5b (strain L20).